Here is an 82-residue protein sequence, read N- to C-terminus: Cytochrome b559 subunit alpha (82 aa).

A helical membrane pass occupies residues 22–36; that stretch reads IIHAVTLPAIFIAGF. H24 is a binding site for heme.

This sequence belongs to the PsbE/PsbF family. As to quaternary structure, heterodimer of an alpha subunit and a beta subunit. PSII is composed of 1 copy each of membrane proteins PsbA, PsbB, PsbC, PsbD, PsbE, PsbF, PsbH, PsbI, PsbJ, PsbK, PsbL, PsbM, PsbT, PsbX, PsbY, Psb30/Ycf12, peripheral proteins PsbO, CyanoQ (PsbQ), PsbU, PsbV and a large number of cofactors. It forms dimeric complexes. It depends on heme b as a cofactor.

The protein resides in the cellular thylakoid membrane. In terms of biological role, this b-type cytochrome is tightly associated with the reaction center of photosystem II (PSII). PSII is a light-driven water:plastoquinone oxidoreductase that uses light energy to abstract electrons from H(2)O, generating O(2) and a proton gradient subsequently used for ATP formation. It consists of a core antenna complex that captures photons, and an electron transfer chain that converts photonic excitation into a charge separation. The chain is Cytochrome b559 subunit alpha from Prochlorococcus marinus (strain MIT 9515).